Consider the following 507-residue polypeptide: Putative propionyl-CoA carboxylase beta chain (507 aa).

Basic and acidic residues predominate over residues 1 to 25 (MNEHMDHFYTKRKQAEEGGGREKLA). The interval 1–30 (MNEHMDHFYTKRKQAEEGGGREKLAQQRQK) is disordered. The CoA carboxyltransferase N-terminal domain maps to 1–254 (MNEHMDHFYT…NGRTTEPKPE (254 aa)). The segment at 1-501 (MNEHMDHFYT…HKTEERPKKK (501 aa)) is carboxyltransferase. Positions 256-501 (EASRPLLNRL…HKTEERPKKK (246 aa)) constitute a CoA carboxyltransferase C-terminal domain.

This sequence belongs to the AccD/PCCB family. Probably a dodecamer composed of six biotin-containing alpha subunits and six beta subunits.

The catalysed reaction is propanoyl-CoA + hydrogencarbonate + ATP = (S)-methylmalonyl-CoA + ADP + phosphate + H(+). The protein operates within metabolic intermediate metabolism; propanoyl-CoA degradation; succinyl-CoA from propanoyl-CoA: step 1/3. This Bacillus subtilis (strain 168) protein is Putative propionyl-CoA carboxylase beta chain (yqjD).